Consider the following 679-residue polypeptide: MGKILFEIGAEEIPARFIPLAISQIEENFKKITSEYRIELESIKVYATPRRLTLLAELSSEQASEEKLVWGPPVHVAFDEKGLPKESAYAFAKAQGIEVDQLQIKPKGKGNYVCAVLSKKGKKTEEVLPEILRNLFYSLNFPKMMRWGEGTLRFIRPVRWFLALYDDRFISFEIEGIKTENKTQGHRFLSENPLNIDRVDNYEFILEKAFVIVDPEKRKKIILTQAEELAKKVNGKILWNNELIEEVTYLVEFPNSVLCSFSMQYLKLPEELLITVMKDHQRYFAIIDNEGKLKNYFVVVSNTKAENEENIKKGAERVIKARFEDARFYYEEDLKKGLVNLLEATKGIIYHKKLGSLYDKSLRIIRIAERLSDRLIPEKTELVKIAANYCKADLASGVVGEFPELQGIMGGYYAKNAGMPEEVFLAIREHYLPKGFTDEIPSNDIGCIISLADKLDHIATFFYLGEIPSGTEDPFGLRRAANGIISILLKKKYSLSLLETVSMIQEFVDEKLKEQISIFIVQRFESYLESTGYDVNLIKTISDFILIRPVYEIKKRLEAVSLFRSKEDFEEFFLAVKRVSNIIKNYEKFELNPELFSSEEEKKLFNEIEKYKENLYEYLNSQQFFEALNYLHKLTPTINNFFDNVLVMDKDEKIKRNRLALLQHLSELLKSVADISRLY.

It belongs to the class-II aminoacyl-tRNA synthetase family. In terms of assembly, tetramer of two alpha and two beta subunits.

The protein resides in the cytoplasm. The enzyme catalyses tRNA(Gly) + glycine + ATP = glycyl-tRNA(Gly) + AMP + diphosphate. This is Glycine--tRNA ligase beta subunit from Thermodesulfovibrio yellowstonii (strain ATCC 51303 / DSM 11347 / YP87).